We begin with the raw amino-acid sequence, 322 residues long: GTP 3',8-cyclase (322 aa).

In terms of domain architecture, Radical SAM core spans 4 to 229 (NFNRNIDYLR…IPVQMKKSGP (226 aa)). Arginine 13 lines the GTP pocket. [4Fe-4S] cluster contacts are provided by cysteine 20 and cysteine 24. An S-adenosyl-L-methionine-binding site is contributed by tyrosine 26. Cysteine 27 lines the [4Fe-4S] cluster pocket. Residue arginine 64 coordinates GTP. Glycine 68 is an S-adenosyl-L-methionine binding site. A GTP-binding site is contributed by threonine 95. Serine 119 is an S-adenosyl-L-methionine binding site. Lysine 156 provides a ligand contact to GTP. Methionine 190 serves as a coordination point for S-adenosyl-L-methionine. 2 residues coordinate [4Fe-4S] cluster: cysteine 253 and cysteine 256. GTP is bound at residue 258–260 (RLR). Cysteine 270 serves as a coordination point for [4Fe-4S] cluster.

This sequence belongs to the radical SAM superfamily. MoaA family. In terms of assembly, monomer and homodimer. [4Fe-4S] cluster is required as a cofactor.

It catalyses the reaction GTP + AH2 + S-adenosyl-L-methionine = (8S)-3',8-cyclo-7,8-dihydroguanosine 5'-triphosphate + 5'-deoxyadenosine + L-methionine + A + H(+). Its pathway is cofactor biosynthesis; molybdopterin biosynthesis. Its function is as follows. Catalyzes the cyclization of GTP to (8S)-3',8-cyclo-7,8-dihydroguanosine 5'-triphosphate. The polypeptide is GTP 3',8-cyclase (Thermodesulfovibrio yellowstonii (strain ATCC 51303 / DSM 11347 / YP87)).